The chain runs to 64 residues: Prokaryotic ubiquitin-like protein Pup (64 aa).

Residues 1–11 (MAQEQTKRGGG) are compositionally biased toward basic and acidic residues. Positions 1–36 (MAQEQTKRGGGGDDDDVTDLGGPAGQERREKLAEDT) are disordered. Positions 21-58 (GGPAGQERREKLAEDTDDLLDEIDDVLEENAEDFVRAY) are ARC ATPase binding. Residues 24-52 (AGQERREKLAEDTDDLLDEIDDVLEENAE) are a coiled coil. Q64 bears the Deamidated glutamine mark. Q64 is covalently cross-linked (Isoglutamyl lysine isopeptide (Gln-Lys) (interchain with K-? in acceptor proteins)).

The protein belongs to the prokaryotic ubiquitin-like protein family. Strongly interacts with the proteasome-associated ATPase ARC through a hydrophobic interface; the interacting region of Pup lies in its C-terminal half. There is one Pup binding site per ARC hexamer ring. Post-translationally, is modified by deamidation of its C-terminal glutamine to glutamate by the deamidase Dop, a prerequisite to the subsequent pupylation process.

It functions in the pathway protein degradation; proteasomal Pup-dependent pathway. Its function is as follows. Protein modifier that is covalently attached to lysine residues of substrate proteins, thereby targeting them for proteasomal degradation. The tagging system is termed pupylation. This chain is Prokaryotic ubiquitin-like protein Pup, found in Mycobacteroides abscessus (strain ATCC 19977 / DSM 44196 / CCUG 20993 / CIP 104536 / JCM 13569 / NCTC 13031 / TMC 1543 / L948) (Mycobacterium abscessus).